The chain runs to 198 residues: Snake venom metalloproteinase neuwiedase (198 aa).

One can recognise a Peptidase M12B domain in the interval 8–198 (RYIELVIVAD…QTFLTNHNPQ (191 aa)). Residues Glu11 and Asp95 each coordinate Ca(2+). His144 contributes to the Zn(2+) binding site. The active site involves Glu145. Residues His148 and His154 each contribute to the Zn(2+) site. 2 disulfides stabilise this stretch: Cys159/Cys183 and Cys161/Cys166.

This sequence belongs to the venom metalloproteinase (M12B) family. P-I subfamily. Requires Zn(2+) as cofactor. As to expression, expressed by the venom gland.

It localises to the secreted. With respect to regulation, inhibited by EDTA, EGTA and 1,10-phenanthroline, partially inhibited by beta-mercaptoethanol and not inhibited by serine protease inhibitors (leupeptin and aprotinin). Also inhibited by an excess of zinc, mercury and magnesium ions. Extracts of the plant Casearia mariquitensis neutralizes the decrease of platelets and plasma fibrinogen induced by the protease. The same extracts also partially inhibit Bbeta chain cleavage, but not Aalpha chain cleavage. This metalloprotease hydrolyzes the Aalpha chain of fibrin and fibrinogen first followed by the Bbeta chain and shows no effect on the gamma chain. It is also able to degrade type I collagen, fibronectin, laminin and induces inflammatory reaction. It is devoid of hemorrhagic and thrombotic activities, except in lung where it induces pulmonary bleeding. It also induces a mild myotoxic reaction. It is not able to inhibit platelet aggregation, but it induces decrease of platelets and plasma fibrinogen. It contributes to local tissue damage by inducing edema, inflammatory infiltrate and mild myotoxicity, and by degrading extracellular matrix components. In Bothrops pauloensis (Neuwied's lancehead), this protein is Snake venom metalloproteinase neuwiedase.